The chain runs to 441 residues: Homoserine dehydrogenase (441 aa).

2 residues coordinate NADP(+): Asn17 and Val18. Positions 18 and 47 each coordinate NAD(+). NADPH is bound at residue Val18. 3 residues coordinate NADP(+): Arg49, Arg50, and Lys107. Arg49 is a binding site for NADPH. Lys107 lines the NADPH pocket. Na(+) contacts are provided by Glu131, Val134, Gly136, and Ile138. Positions 189 and 192 each coordinate NADP(+). Residues Glu192 and Asp203 each contribute to the L-homoserine site. Lys207 serves as the catalytic Proton donor. Gly309 is an NADP(+) binding site. Gly309 serves as a coordination point for NAD(+). Gly309 is a binding site for NADPH. The ACT domain maps to 356–435 (YVSMNVADKP…VVQGVTSVLR (80 aa)).

Belongs to the homoserine dehydrogenase family. It depends on a metal cation as a cofactor.

It catalyses the reaction L-homoserine + NADP(+) = L-aspartate 4-semialdehyde + NADPH + H(+). The catalysed reaction is L-homoserine + NAD(+) = L-aspartate 4-semialdehyde + NADH + H(+). Its pathway is amino-acid biosynthesis; L-methionine biosynthesis via de novo pathway; L-homoserine from L-aspartate: step 3/3. The protein operates within amino-acid biosynthesis; L-threonine biosynthesis; L-threonine from L-aspartate: step 3/5. In terms of biological role, catalyzes the conversion of L-aspartate-beta-semialdehyde (L-Asa) to L-homoserine (L-Hse), the third step in the biosynthesis of threonine and methionine from aspartate. The sequence is that of Homoserine dehydrogenase (hom) from Mycobacterium leprae (strain TN).